A 344-amino-acid chain; its full sequence is MSVVVRHDWDRKELHALFALPFPELLHRAASVHRAHFDPAEVQVSTLLSVKTGGCPEDCAYCPQAQRYDTGVSAQKLMDTEDVVAKARQAKAAGASRFCMGAAWRSPKDRDIPKVAAMIREVKAMGLETCATLGMLDAGQARALKDAGLDYYNHNLDTAPDYYDSIIHTRQYQDRLNTLEHVRDVGLKTCCGGIVGMGETREHRVGLLHALATLPAHPDSVPINQLVQVPGTPLHGTEPLDAFEFVRMIAVARIAMPKSMVRLSAGREAMSDELQALCFLAGANSIFYGEKLLTTGNPDTERDQGLFQRLGLRPMQITVDAAEHDHPGTVHADITCGAACEHAA.

Residues 40 to 267 (AEVQVSTLLS…KSMVRLSAGR (228 aa)) enclose the Radical SAM core domain. Positions 55, 59, and 62 each coordinate [4Fe-4S] cluster. [2Fe-2S] cluster-binding residues include Cys-99, Cys-130, Cys-190, and Arg-262.

The protein belongs to the radical SAM superfamily. Biotin synthase family. As to quaternary structure, homodimer. [4Fe-4S] cluster serves as cofactor. The cofactor is [2Fe-2S] cluster.

The catalysed reaction is (4R,5S)-dethiobiotin + (sulfur carrier)-SH + 2 reduced [2Fe-2S]-[ferredoxin] + 2 S-adenosyl-L-methionine = (sulfur carrier)-H + biotin + 2 5'-deoxyadenosine + 2 L-methionine + 2 oxidized [2Fe-2S]-[ferredoxin]. The protein operates within cofactor biosynthesis; biotin biosynthesis; biotin from 7,8-diaminononanoate: step 2/2. In terms of biological role, catalyzes the conversion of dethiobiotin (DTB) to biotin by the insertion of a sulfur atom into dethiobiotin via a radical-based mechanism. This Xanthomonas campestris pv. campestris (strain 8004) protein is Biotin synthase.